Here is a 467-residue protein sequence, read N- to C-terminus: MHQPGSHQIQPIDSLTPFLGGKWWIRARVADKSDIRTWNKPTSQGKLFSFTLIDESAAIRATVFNDAVDTFEPLVVNGQVYYFSGGQVKNANRRFSNVNNDYELTFDRASEVILARQDSSAAALPMQRYNFVPIELLKQREVGSLVDVLGVVLKVDEISSITQKSTGRELIKRNVKIGDMSAAVEVTFWNDEAKAWNYPVGTVVALRQLKVGSFDGVTLSSTYQTKIDVNPADLPDVKKLATWYVSTGGANVVSLSSQGLGAGGGGGGEGNRGRKYLDEIQSEGIGRGAKPEYVDVRCVPIYFKQDAQWYDACPTCNKKVTEEGAQGDRFRCEKCDATVVPTQRYLVSIQVTDNVSQVWLTLFNEAGVEFFGMEASELKRRAQEDPLYIAKLAQARMNRPVVMRLRVKEETNANAMTGEESDRLRMSVVRISEFMPVAGTTEETRRRLAQNLRSECDDILRCIEAYV.

A DNA-binding region (OB) is located at residues 23 to 105 (WWIRARVADK…SNVNNDYELT (83 aa)). The C4-type zinc-finger motif lies at 313-335 (CPTCNKKVTEEGAQGDRFRCEKC).

It belongs to the replication factor A protein 1 family. In terms of assembly, component of the heterotrimeric canonical replication protein A complex (RPA). In terms of processing, the N-terminus is blocked.

It is found in the nucleus. Functionally, as part of the heterotrimeric replication protein A complex (RPA/RP-A), binds and stabilizes single-stranded DNA intermediates, that form during DNA replication or upon DNA stress. It prevents their reannealing and in parallel, recruits and activates different proteins and complexes involved in DNA metabolism. Thereby, it plays an essential role both in DNA replication and the cellular response to DNA damage. The sequence is that of Replication factor A 51 kDa subunit (RPA1) from Crithidia fasciculata.